A 304-amino-acid chain; its full sequence is Acetaldehyde dehydrogenase 1 (304 aa).

Residue 11-14 (SGNI) coordinates NAD(+). The active-site Acyl-thioester intermediate is cysteine 130. Residues 161 to 169 (SVGPGTRAN) and asparagine 272 contribute to the NAD(+) site.

Belongs to the acetaldehyde dehydrogenase family.

It carries out the reaction acetaldehyde + NAD(+) + CoA = acetyl-CoA + NADH + H(+). This Azoarcus sp. (strain BH72) protein is Acetaldehyde dehydrogenase 1 (lapF).